A 305-amino-acid polypeptide reads, in one-letter code: Serine/threonine-protein kinase 16 (305 aa).

The N-myristoyl glycine moiety is linked to residue G2. 2 S-palmitoyl cysteine lipidation sites follow: C6 and C8. Positions 20 to 293 (YLFIQKLGEG…PLLLSQLEAL (274 aa)) constitute a Protein kinase domain. ATP contacts are provided by residues 26-34 (LGEGGFSYV) and K49. The Proton acceptor role is filled by D148. The interval 166–202 (DLGSMNQACIHVEGSRQALTLQDWAAQRCTISYRAPE) is activation loop. T185 is subject to Phosphothreonine; by autocatalysis. S197 carries the post-translational modification Phosphoserine; by autocatalysis. Y198 bears the Phosphotyrosine; by autocatalysis mark.

It belongs to the protein kinase superfamily. Ser/Thr protein kinase family. As to quaternary structure, monomer. Interacts with DRG1 (via its N-terminal); the interaction phosphorylates DRG1. Mainly autophosphorylated on serine/threonine residues. Also autophosphorylated on Tyr-198. In terms of processing, it is uncertain whether palmitoylation is on Cys-6 and/or Cys-8. Ubiquitously expressed at very low levels.

The protein resides in the cytoplasm. Its subcellular location is the perinuclear region. It is found in the membrane. The catalysed reaction is L-seryl-[protein] + ATP = O-phospho-L-seryl-[protein] + ADP + H(+). It catalyses the reaction L-threonyl-[protein] + ATP = O-phospho-L-threonyl-[protein] + ADP + H(+). The enzyme catalyses L-tyrosyl-[protein] + ATP = O-phospho-L-tyrosyl-[protein] + ADP + H(+). In terms of biological role, membrane-associated protein kinase that phosphorylates on serine and threonine residues. In vitro substrates include DRG1, ENO1 and EIF4EBP1. Also autophosphorylates. May be involved in secretory vesicle trafficking or intracellular signaling. May have a role in regulating stromal-epithelial interactions that occur during ductal morphogenesis in the mammary gland. May be involved in TGF-beta signaling. Able to autophosphorylate on Tyr residue; it is however unclear whether it has tyrosine-protein kinase toward other proteins. This is Serine/threonine-protein kinase 16 (STK16) from Homo sapiens (Human).